Consider the following 744-residue polypeptide: Glucosamine inositolphosphorylceramide transferase 1 (744 aa).

The next 3 membrane-spanning stretches (helical) occupy residues 31-51 (FLVAAAAGAALVGGVYFWLVV), 378-398 (SLFGYMGFLVAVALVTFVGFV), and 460-480 (LFFCVIALIGIVNVCIAVHFL). Residues Asn-534, 558–563 (NSLNNR), 579–581 (DDD), Arg-609, and 665–669 (FNCED) each bind substrate. Asp-581 is a binding site for Mn(2+). A disulfide bridge connects residues Cys-667 and Cys-718. Asp-669 is an active-site residue.

This sequence belongs to the glycosyltransferase 64 family. It depends on Mn(2+) as a cofactor. In terms of tissue distribution, highly expressed in almost all tissues.

Its subcellular location is the membrane. It functions in the pathway sphingolipid metabolism. Essential protein. Glycosyltransferase that mediates the glycosylation of glycosylinositol phosphorylceramides (GIPCs), the major sphingolipids in the plasma membrane; acts as a HexN(Ac)-specific GIPC sugar transferase. Responsible for the glycosylation of a subgroup of GIPCs found in seeds and pollen that contain GlcNAc and GlcN (GlcN(Ac)). Maybe involved in the maintenance of cell-cell adhesion. The polypeptide is Glucosamine inositolphosphorylceramide transferase 1 (Oryza sativa subsp. japonica (Rice)).